The following is a 243-amino-acid chain: Probable transcriptional regulatory protein BPP2422 (243 aa).

The segment at 1–21 (MAGHSKWANIQHRKGRQDAKR) is disordered.

Belongs to the TACO1 family.

Its subcellular location is the cytoplasm. In Bordetella parapertussis (strain 12822 / ATCC BAA-587 / NCTC 13253), this protein is Probable transcriptional regulatory protein BPP2422.